We begin with the raw amino-acid sequence, 3707 residues long: MKGIRKGESRAKESKPWEPGKRRCAKCGRLDFILMKKMGIKSGFTFWNLVFLLTVSCVKGFIYTCGGTLKGLNGTIESPGFPYGYPNGANCTWVIIAEERNRIQIVFQSFALEEEYDYLSLYDGHPHPTNFRTRLTGFHLPPPVTSTKSVFSLRLTSDFAVSAHGFKVYYEELQSSSCGNPGVPPKGVLYGTRFDVGDKIRYSCVTGYILDGHPQLTCIANSVNTASWDFPVPICRAEDACGGTMRGSSGIISSPSFPNEYHNNADCTWTIVAEPGDTISLIFTDFQMEEKYDYLEIEGSEPPTIWLSGMNIPPPIISNKNWLRLHFVTDSNHRYRGFSAPYQGSSTLTHTTSTGELEEHNRTTTGAIAVASTPADVTVSSVTAVTIHRLSEEQRVQVTSLRNSGLDPNTSKDGLSPHPADTQSTRRRPRHAEQIERTKELAVVTHRVKKAIDFKSRGFKLFPGKDNSNKFSILNEGGIKTASNLCPDPGEPENGKRIGSDFSLGSTVQFSCDEDYVLQGAKSITCQRIAEVFAAWSDHRPVCKVKTCGSNLQGPSGTFTSPNFPFQYDSNAQCVWVITAVNTNKVIQINFEEFDLEIGYDTLTIGDGGEVGDPRTVLQVLTGSFVPDLIVSMSSQMWLHLQTDESVGSVGFKVNYKEIEKESCGDPGTPLYGIREGDGFSNRDVLRFECQFGFELIGEKSIVCQENNQWSANIPICIFPCLSNFTAPMGTVLSPDYPEGYGNNLNCIWTIISDPGSRIHLSFNDFDLESQFDFLAVKDGDSPESPILGTFTGAEVPSHLTSNSHILRLEFQADHSMSGRGFNITYNTFGHNECPDPGIPINARRFGDNFQLGSSISVICEEGFIKTQGTETITCILMDGKVMWSGLIPKCGAPCGGHFSAPSGVILSPGWPGYYKDSLNCEWVIEAEPGHSIKITFERFQTELNYDVLEVHDGPNLLSPLLGSYNGTQVPQFLFSSSNFIYLLFTTDNSRSNNGFKIHYESVTVNTYSCLDPGIPVHGRRYGHDFSIGSTVSFSCDSGYRLSHEEPLLCEKNHWWSHPLPTCDALCGGDVRGPSGTILSPGYPEFYPNSLNCTWTVDVTHGKGVQFNFHTFHLEDHHDYLLITENGSFTQPLARLTGSDLPPTINAGLYGNFRAQLRFISDFSISYEGFNITFSEYNLEPCEDPGIPQYGSRIGFNFGIGDTLTFSCSSGYRLEGTSEIICLGGGRRVWSAPLPRCVAECGASATNNEGILLSPNYPLNYENNHECIYSIQVQAGKGINISARTFHLAQGDVLKIYDGKDKTTHLLGAFTGASMRGLTLSSTSNQLWLEFNSDTEGTDEGFQLVYTSFELSHCEDPGIPQFGYKISDQGHFAGSTIIYGCNPGYTLHGSSLLKCMTGERRAWDYPLPSCIAECGGRFKGESSGRILSPGYPFPYDNNLRCMWMIEVDPGNIVSLQFLAFDTEASHDILRVWDGPPENDMLLKEISGSLIPEGIHSTLNIVTIQFDTDFYISKSGFAIQFSSSVATACRDPGVPMNGTRNGDGREPGDTVVFQCDPGYELQGEERITCIQVENRYFWQPSPPVCIAPCGGNLTGSSGFILSPNFPHPYPHSRDCDWTITVNADYVISLAFISFSIEPNYDFLYIYDGPDSNSPLIGSFQDSKLPERIESSSNTMHLAFRSDGSVSYTGFHLEYKAKLRESCFDPGNIMNGTRLGMDYKLGSTVTYYCDAGYVLQGYSTLTCIMGDDGRPGWNRALPSCHAPCGSRSTGSEGTVLSPNYPKNYSVGHNCVYSIAVPKEFVVFGQFVFFQTSLHDVVEVYDGPTQQSSLLSSLSGSHSGESLPLSSGNQITIRFTSVGPITAKGFHFVYQAVPRTSSTQCSSVPEPRFGRRIGNEFAVGSSVLFDCNPGYILHGSIAIRCETVPNSLAQWNDSLPTCIVPCGGILTKRKGTILSPGYPEPYDNNLNCVWKITVPEGAGIQVQVVSFATEHNWDSLDFYDGGDNNAPRLGSYSGTTIPHLLNSTSNNLYLNFQSDISVSAAGFHLEYTAIGLDSCPEPQTPSSGIKIGDRYMVGDVVSFQCDQGYSLQGHSHITCMPGPVRRWNYPIPICLAQCGGAMSDFSGVILSPGFPGNYPSSLDCTWTINLPIGFGVHLQFVNFSTETIHDYLEVRSGSSETSTVIGRLSGPQIPSSLFSTTHETSLYFHSDYSQNKQGFHIVYQAYQLQSCPDPRPFRNGFVIGNDFTVGQTISFECFPGYTLIGNSALTCLHGVSRNWNHPLPRCEALCGGNITAMNGTIYSPGYPDEYPNFQDCFWLVRVPPGNGIYINFTVLQTEPIYDFITVWDGPDQNSPQIGQFSGNTALESVYSTSNQILIKFHSDFTTSGFFVLSYHAYQLRVCQPPPPVPNAEILTEDDEFEIGDIIRYQCLPGFTLVGNAILTCRLGERLQMDGAPPVCQVLCPANELRLDSTGVILSPGYPDSYPNLQMCAWSISVEKGYNITMFVEFFQTEKEFDVLQVYDGPNIQSPVLISLSGDYSSAFNITSNGHEVFLQWSADHGNNKKGFRIRYIAFYCSTPESPPHGYIISQTGGQLNSVVRWACDRGFRLVGKSSAVCRKSSYGYHAWDAPVPACQAISCGIPKAPTNGGILTTDYLVGTRVTYFCNDGYRLSSKELTTAVCQSDGTWSNHNKTPRCVVVTCPSINSFILEHGRWRIVNGSHYEYKTKVVFSCDPGYHGLGPASIECLPNGTWSWRNERPYCQIISCGELPTPPNGNKIGTQTSYGSTAIFTCDLGFMLVGSAVRECLSSGLWSESETRCLAGHCGIPELIVNGQVIGENYGYRDTVVYQCNPGFRLIGSSVRICQQDHNWSGQLPSCVPVSCGHPGSPIYGRTSGNGFNFNDVVTFSCNIGYLMQGPTKAQCQANRQWSHPPPMCKVVNCSDPGIPANSKRESKIEHGNFTYGTVVFYDCNPGYFLFGSSVLICQPNGQWDKPLPECIMIDCGHPGVPPNAVLSGEKYTFGSTVHYSCTGKRSLLGQSSRTCQLNGHWSGSQPHCSGDATGTCGDPGTPGHGSRQESNFRTKSTVRYACDTGYILHGSEERTCLANGSWTGRQPECKAVQCGNPGTTANGKVFRIDGTTFSSSVIYSCMEGYILSGPSVRQCTANGTWSGTLPNCTIISCGDPGIPANGLRYGDDYVVGQNVSYMCQPGYTMELNGSRIRTCTINGTWSGVMPTCRAVTCPTPPQISNGRLEGTNFDWGFSISYICSPGYELSFPAVLTCVGNGTWSGEVPQCLPKFCGDPGIPAQGKREGKSFIYQSEVSFSCNFPFILVGSSTRICQADGTWSGSSPHCIEPTQTSCENPGVPRHGSQNNTFGFQVGSVVQFHCKKGHLLQGSTTRTCLPDLTWSGIQPECIPHSCKQPETPAHANVVGMDLPSHGYTLIYTCQPGFFLAGGTEHRVCRSDNTWTGKVPICEAGSKILVKDPRPALGTPSPKLSVPDDVFAQNYIWKGSYNFKGRKQPMTLTVTSFNASTGRVNATLSNSNMELLLSGVYKSQEARLMLRIYLIKVPAHASVKKMKEENWAMDGFVSAEPDGATYVFQGFIQGKDYGQFGLQRLGLNMSEGSNSSNQPHGTNSSSVAIAILVPFFALIFAGFGFYLYKQRTAPKTQYTGCSVHENNNGQAAFENPMYDTNAKSVEGKAVRFDPNLNTVCTMV.

The interval 1–21 (MKGIRKGESRAKESKPWEPGK) is disordered. Residues 1–42 (MKGIRKGESRAKESKPWEPGKRRCAKCGRLDFILMKKMGIKS) are Cytoplasmic-facing. The chain crosses the membrane as a helical span at residues 43-63 (GFTFWNLVFLLTVSCVKGFIY). The Extracellular portion of the chain corresponds to 64–3630 (TCGGTLKGLN…NQPHGTNSSS (3567 aa)). Intrachain disulfides connect C65/C91, C178/C218, C204/C235, and C241/C267. One can recognise a CUB 1 domain in the interval 65-173 (CGGTLKGLNG…HGFKVYYEEL (109 aa)). N73 and N90 each carry an N-linked (GlcNAc...) asparagine glycan. One can recognise a Sushi 1 domain in the interval 176 to 237 (SSCGNPGVPP…WDFPVPICRA (62 aa)). Residues 241 to 345 (CGGTMRGSSG…RGFSAPYQGS (105 aa)) enclose the CUB 2 domain. N361 and N409 each carry an N-linked (GlcNAc...) asparagine glycan. The disordered stretch occupies residues 394-435 (QRVQVTSLRNSGLDPNTSKDGLSPHPADTQSTRRRPRHAEQI). The span at 396 to 413 (VQVTSLRNSGLDPNTSKD) shows a compositional bias: polar residues. Residues 484–545 (NLCPDPGEPE…WSDHRPVCKV (62 aa)) enclose the Sushi 2 domain. 6 disulfide bridges follow: C486–C526, C512–C543, C548–C574, C664–C704, C690–C717, and C721–C747. The CUB 3 domain maps to 548 to 659 (CGSNLQGPSG…VGFKVNYKEI (112 aa)). The 58-residue stretch at 662–719 (ESCGDPGTPLYGIREGDGFSNRDVLRFECQFGFELIGEKSIVCQENNQWSANIPICIF) folds into the Sushi 3 domain. The CUB 4 domain occupies 721–829 (CLSNFTAPMG…RGFNITYNTF (109 aa)). N724 and N823 each carry an N-linked (GlcNAc...) asparagine glycan. The 62-residue stretch at 832–893 (NECPDPGIPI…WSGLIPKCGA (62 aa)) folds into the Sushi 4 domain. 3 cysteine pairs are disulfide-bonded: C834–C875, C860–C891, and C895–C921. The CUB 5 domain maps to 895 to 1003 (CGGHFSAPSG…NGFKIHYESV (109 aa)). N966 carries an N-linked (GlcNAc...) asparagine glycan. The 58-residue stretch at 1008–1065 (YSCLDPGIPVHGRRYGHDFSIGSTVSFSCDSGYRLSHEEPLLCEKNHWWSHPLPTCDA) folds into the Sushi 5 domain. Intrachain disulfides connect C1010–C1050, C1036–C1063, and C1067–C1093. In terms of domain architecture, CUB 6 spans 1067–1177 (CGGDVRGPSG…EGFNITFSEY (111 aa)). N-linked (GlcNAc...) asparagine glycosylation is found at N1092, N1126, and N1171. The 60-residue stretch at 1180–1239 (EPCEDPGIPQYGSRIGFNFGIGDTLTFSCSSGYRLEGTSEIICLGGGRRVWSAPLPRCVA) folds into the Sushi 6 domain. 3 cysteine pairs are disulfide-bonded: C1182/C1222, C1208/C1237, and C1241/C1267. Residues 1241 to 1349 (CGASATNNEG…EGFQLVYTSF (109 aa)) form the CUB 7 domain. An N-linked (GlcNAc...) asparagine glycan is attached at N1280. A Sushi 7 domain is found at 1352–1412 (SHCEDPGIPQ…WDYPLPSCIA (61 aa)). 12 cysteine pairs are disulfide-bonded: C1354–C1395, C1381–C1410, C1414–C1441, C1528–C1568, C1554–C1584, C1588–C1614, C1701–C1741, C1727–C1758, C1762–C1788, C1878–C1918, C1904–C1935, and C1939–C1965. The CUB 8 domain maps to 1414-1523 (CGGRFKGESS…SGFAIQFSSS (110 aa)). The region spanning 1526–1586 (TACRDPGVPM…WQPSPPVCIA (61 aa)) is the Sushi 8 domain. The N-linked (GlcNAc...) asparagine glycan is linked to N1536. The CUB 9 domain maps to 1588 to 1696 (CGGNLTGSSG…TGFHLEYKAK (109 aa)). N1591 and N1709 each carry an N-linked (GlcNAc...) asparagine glycan. One can recognise a Sushi 9 domain in the interval 1699-1760 (ESCFDPGNIM…WNRALPSCHA (62 aa)). One can recognise a CUB 10 domain in the interval 1762-1870 (CGSRSTGSEG…KGFHFVYQAV (109 aa)). The N-linked (GlcNAc...) asparagine glycan is linked to N1781. The 62-residue stretch at 1876-1937 (TQCSSVPEPR…WNDSLPTCIV (62 aa)) folds into the Sushi 10 domain. An N-linked (GlcNAc...) asparagine glycan is attached at N1929. Positions 1939–2047 (CGGILTKRKG…AGFHLEYTAI (109 aa)) constitute a CUB 11 domain. N-linked (GlcNAc...) asparagine glycosylation occurs at N2019. Residues 2050–2109 (DSCPEPQTPSSGIKIGDRYMVGDVVSFQCDQGYSLQGHSHITCMPGPVRRWNYPIPICLA) form the Sushi 11 domain. Cystine bridges form between C2052–C2092, C2078–C2107, and C2111–C2137. The region spanning 2111 to 2219 (CGGAMSDFSG…QGFHIVYQAY (109 aa)) is the CUB 12 domain. The N-linked (GlcNAc...) asparagine glycan is linked to N2155. The region spanning 2222–2281 (QSCPDPRPFRNGFVIGNDFTVGQTISFECFPGYTLIGNSALTCLHGVSRNWNHPLPRCEA) is the Sushi 12 domain. Intrachain disulfides connect C2224/C2264, C2250/C2279, and C2283/C2309. Residues 2283-2394 (CGGNITAMNG…LSYHAYQLRV (112 aa)) form the CUB 13 domain. N-linked (GlcNAc...) asparagine glycans are attached at residues N2286, N2291, and N2324. A Sushi 13 domain is found at 2393-2454 (RVCQPPPPVP…MDGAPPVCQV (62 aa)). 3 disulfides stabilise this stretch: C2395–C2437, C2423–C2452, and C2456–C2484. Residues 2456-2567 (CPANELRLDS…KGFRIRYIAF (112 aa)) form the CUB 14 domain. Residues N2495 and N2537 are each glycosylated (N-linked (GlcNAc...) asparagine). 15 Sushi domains span residues 2567 to 2629 (FYCS…ACQA), 2630 to 2691 (ISCG…RCVV), 2692 to 2756 (VTCP…YCQI), 2757 to 2814 (ISCG…RCLA), 2815 to 2872 (GHCG…SCVP), 2873 to 2930 (VSCG…MCKV), 2931 to 2992 (VNCS…ECIM), 2993 to 3050 (IDCG…HCSG), 3054 to 3111 (GTCG…ECKA), 3112 to 3170 (VQCG…NCTI), 3171 to 3230 (ISCG…TCRA), 3231 to 3288 (VTCP…QCLP), 3289 to 3346 (KFCG…HCIE), 3350 to 3408 (TSCE…ECIP), and 3409 to 3468 (HSCK…ICEA). Intrachain disulfides connect C2569/C2610, C2596/C2627, C2632/C2674, C2658/C2689, C2694/C2739, C2725/C2754, C2759/C2799, C2785/C2812, C2817/C2857, C2843/C2870, C2875/C2915, and C2901/C2928. N-linked (GlcNAc...) asparagine glycans are attached at residues N2711 and N2742. N2862 carries N-linked (GlcNAc...) asparagine glycosylation. 2 N-linked (GlcNAc...) asparagine glycosylation sites follow: N2932 and N2952. Cystine bridges form between C2933–C2977, C2963–C2990, C2995–C3035, C3021–C3048, C3056–C3096, C3082–C3109, C3114–C3155, C3141–C3168, C3173–C3215, C3199–C3228, C3233–C3273, C3259–C3286, C3291–C3331, C3317–C3344, C3352–C3393, C3379–C3406, C3411–C3453, and C3438–C3466. A glycan (N-linked (GlcNAc...) asparagine) is linked at N3099. 5 N-linked (GlcNAc...) asparagine glycosylation sites follow: N3158, N3167, N3194, N3208, and N3218. The N-linked (GlcNAc...) asparagine glycan is linked to N3276. N-linked (GlcNAc...) asparagine glycosylation occurs at N3364. 5 N-linked (GlcNAc...) asparagine glycosylation sites follow: N3522, N3529, N3612, N3618, and N3627. A helical membrane pass occupies residues 3631–3651 (VAIAILVPFFALIFAGFGFYL). The Cytoplasmic segment spans residues 3652–3707 (YKQRTAPKTQYTGCSVHENNNGQAAFENPMYDTNAKSVEGKAVRFDPNLNTVCTMV).

This sequence belongs to the CSMD family. Weakly expressed in most tissues, except in brain. Expressed at intermediate level in brain, including cerebellum, substantia nigra, thalamus, spinal cord, hippocampus and fetal brain. Also expressed in testis.

The protein localises to the cell membrane. In terms of biological role, involved in dendrite development. This Homo sapiens (Human) protein is CUB and sushi domain-containing protein 3 (CSMD3).